The following is a 357-amino-acid chain: Dihydroorotate dehydrogenase (quinone) (357 aa).

FMN contacts are provided by residues 67 to 71 (AGFDK) and Thr-91. Lys-71 serves as a coordination point for substrate. 116–120 (NRMGF) is a substrate binding site. FMN is bound by residues Asn-153 and Asn-186. Asn-186 provides a ligand contact to substrate. Catalysis depends on Ser-189, which acts as the Nucleophile. A substrate-binding site is contributed by Asn-191. Residues Lys-228 and Thr-256 each contribute to the FMN site. A substrate-binding site is contributed by 257–258 (NT). Residues Gly-282, Gly-311, and 332–333 (YT) each bind FMN.

Belongs to the dihydroorotate dehydrogenase family. Type 2 subfamily. In terms of assembly, monomer. FMN is required as a cofactor.

The protein resides in the cell membrane. It carries out the reaction (S)-dihydroorotate + a quinone = orotate + a quinol. It functions in the pathway pyrimidine metabolism; UMP biosynthesis via de novo pathway; orotate from (S)-dihydroorotate (quinone route): step 1/1. In terms of biological role, catalyzes the conversion of dihydroorotate to orotate with quinone as electron acceptor. This Arthrobacter sp. (strain FB24) protein is Dihydroorotate dehydrogenase (quinone).